A 1089-amino-acid chain; its full sequence is Probable transport protein MmpL8 (1089 aa).

The segment at 1 to 26 (MCDVLMQPVRTPRPSTNLRSKPLRPT) is disordered. 12 helical membrane-spanning segments follow: residues 44–64 (WVVI…VPSL), 222–242 (ITIL…TMVL), 257–277 (LVAI…IFMS), 316–336 (IGKV…GMVF), 349–369 (LGIS…ALMV), 400–420 (KTHL…AGLA), 555–575 (AIST…LLGG), 874–894 (IIAM…RAIV), 898–918 (YLIG…VIVF), 930–950 (IPGL…MLLI), 973–993 (GGVI…LVFA), and 996–1016 (GSVV…TFLV). The tract at residues 1056 to 1078 (RTKRKPLLPKEEEEQSPPDDDDL) is disordered. Residues 1066 to 1078 (EEEEQSPPDDDDL) are compositionally biased toward acidic residues.

Belongs to the resistance-nodulation-cell division (RND) (TC 2.A.6) family. MmpL subfamily.

Its subcellular location is the cell membrane. In Mycobacterium bovis (strain ATCC BAA-935 / AF2122/97), this protein is Probable transport protein MmpL8 (mmpL8).